A 179-amino-acid polypeptide reads, in one-letter code: MTFEDDLQASVRTIPDYPKPGVMFRDITTLLGDARAFRRAVDQLVHPWAGSKIDKVAGIEARGFILGGAVAHQLSAGFVPIRKKGKLPHQTVRMAYALEYGTDEMEMHVDAIAKGERVILVDDLIATGGTAEGAVKLLRQIGADVVAACFIIDLPDLGGAAKLHAMDVPVRTLMAFGGH.

The protein belongs to the purine/pyrimidine phosphoribosyltransferase family. As to quaternary structure, homodimer.

Its subcellular location is the cytoplasm. The catalysed reaction is AMP + diphosphate = 5-phospho-alpha-D-ribose 1-diphosphate + adenine. The protein operates within purine metabolism; AMP biosynthesis via salvage pathway; AMP from adenine: step 1/1. Its function is as follows. Catalyzes a salvage reaction resulting in the formation of AMP, that is energically less costly than de novo synthesis. This chain is Adenine phosphoribosyltransferase, found in Nitrobacter hamburgensis (strain DSM 10229 / NCIMB 13809 / X14).